Consider the following 275-residue polypeptide: Fructose permease IID component (275 aa).

Residues 5-274 (KRLTKKEIFS…GILGYWAGFL (270 aa)) enclose the PTS EIID domain. The next 5 membrane-spanning stretches (helical) occupy residues 100-120 (MKIGLMGPIAGVGDPIFWGTI), 127-147 (LGASLALGGNIAGPLLFFFLL), 187-207 (ILGLFVMGALVSKWTTINIPI), 227-247 (VLDSIMPGALPLGLTLLVAWM), and 255-275 (LLIICGIFVIGILGYWAGFLA).

The protein resides in the cell membrane. Functionally, the phosphoenolpyruvate-dependent sugar phosphotransferase system (PTS), a major carbohydrate active -transport system, catalyzes the phosphorylation of incoming sugar substrates concomitant with their translocation across the cell membrane. This system is involved in fructose transport. The polypeptide is Fructose permease IID component (levG) (Bacillus subtilis (strain 168)).